A 146-amino-acid chain; its full sequence is Gonadotropin subunit beta-2 (146 aa).

The signal sequence occupies residues 1 to 28; it reads TGTPVKILVVRNILLLLFCLVVLLVFAQ. Disulfide bonds link C35–C83, C49–C98, C52–C136, C60–C114, C64–C116, and C119–C126. N-linked (GlcNAc...) asparagine glycosylation occurs at N39.

This sequence belongs to the glycoprotein hormones subunit beta family. In terms of assembly, heterodimer of an alpha and a beta chain.

The protein resides in the secreted. Functionally, involved in gametogenesis and steroidogenesis. The sequence is that of Gonadotropin subunit beta-2 (cgbb) from Ctenopharyngodon idella (Grass carp).